A 106-amino-acid chain; its full sequence is Large ribosomal subunit protein uL22 (106 aa).

Belongs to the universal ribosomal protein uL22 family. As to quaternary structure, part of the 50S ribosomal subunit.

Functionally, this protein binds specifically to 23S rRNA; its binding is stimulated by other ribosomal proteins, e.g. L4, L17, and L20. It is important during the early stages of 50S assembly. It makes multiple contacts with different domains of the 23S rRNA in the assembled 50S subunit and ribosome. In terms of biological role, the globular domain of the protein is located near the polypeptide exit tunnel on the outside of the subunit, while an extended beta-hairpin is found that lines the wall of the exit tunnel in the center of the 70S ribosome. The protein is Large ribosomal subunit protein uL22 of Nautilia profundicola (strain ATCC BAA-1463 / DSM 18972 / AmH).